Here is a 321-residue protein sequence, read N- to C-terminus: Beta-ketoacyl-[acyl-carrier-protein] synthase III (321 aa).

Active-site residues include C115 and H248. The tract at residues 249–253 is ACP-binding; sequence QANIR. N278 is a catalytic residue.

Belongs to the thiolase-like superfamily. FabH family. In terms of assembly, homodimer.

The protein resides in the cytoplasm. The catalysed reaction is malonyl-[ACP] + acetyl-CoA + H(+) = 3-oxobutanoyl-[ACP] + CO2 + CoA. Its pathway is lipid metabolism; fatty acid biosynthesis. Functionally, catalyzes the condensation reaction of fatty acid synthesis by the addition to an acyl acceptor of two carbons from malonyl-ACP. Catalyzes the first condensation reaction which initiates fatty acid synthesis and may therefore play a role in governing the total rate of fatty acid production. Possesses both acetoacetyl-ACP synthase and acetyl transacylase activities. Its substrate specificity determines the biosynthesis of branched-chain and/or straight-chain of fatty acids. This chain is Beta-ketoacyl-[acyl-carrier-protein] synthase III, found in Aromatoleum aromaticum (strain DSM 19018 / LMG 30748 / EbN1) (Azoarcus sp. (strain EbN1)).